Here is a 104-residue protein sequence, read N- to C-terminus: Turripeptide OL55-like (104 aa).

In terms of processing, contains 8 disulfide bonds. Expressed by the venom duct.

Its subcellular location is the secreted. Its function is as follows. Acts as a neurotoxin by inhibiting an ion channel. The polypeptide is Turripeptide OL55-like (Iotyrris cingulifera (Sea snail)).